A 114-amino-acid chain; its full sequence is Fumarate reductase subunit D (114 aa).

3 helical membrane-spanning segments follow: residues 24-44 (VSAI…PFGL), 50-70 (LITF…TIFP), and 92-112 (GGFI…FAVI).

The protein belongs to the FrdD family. As to quaternary structure, part of an enzyme complex containing four subunits: a flavoprotein (FrdA), an iron-sulfur protein (FrdB), and two hydrophobic anchor proteins (FrdC and FrdD).

The protein resides in the cell inner membrane. In terms of biological role, anchors the catalytic components of the fumarate reductase complex to the cell membrane, binds quinones. The chain is Fumarate reductase subunit D from Haemophilus influenzae (strain ATCC 51907 / DSM 11121 / KW20 / Rd).